A 204-amino-acid chain; its full sequence is Ribosomal RNA small subunit methyltransferase G (204 aa).

Residues Gly76, Leu81, 127-128 (IE), and Arg140 each bind S-adenosyl-L-methionine.

This sequence belongs to the methyltransferase superfamily. RNA methyltransferase RsmG family.

Its subcellular location is the cytoplasm. It carries out the reaction guanosine(527) in 16S rRNA + S-adenosyl-L-methionine = N(7)-methylguanosine(527) in 16S rRNA + S-adenosyl-L-homocysteine. Specifically methylates the N7 position of guanine in position 527 of 16S rRNA. This chain is Ribosomal RNA small subunit methyltransferase G, found in Francisella philomiragia subsp. philomiragia (strain ATCC 25017 / CCUG 19701 / FSC 153 / O#319-036).